We begin with the raw amino-acid sequence, 1072 residues long: Teashirt homolog 3 (1072 aa).

Disordered regions lie at residues 44–71 (ACPS…SETS), 130–153 (PSSE…CGSG), and 228–247 (HYRD…WSKP). The span at 57 to 71 (SSHEMDSESHISETS) shows a compositional bias: basic and acidic residues. C2H2-type zinc fingers lie at residues 204–228 (FRCK…ETGH) and 265–289 (LKCM…KTKH). A compositionally biased stretch (basic and acidic residues) spans 228-237 (HYRDDNHETD). Residues 315 to 336 (SLELELPSSPDSTGGTPKATLS) are disordered. A C2H2-type 3; atypical zinc finger spans residues 376 to 400 (LKCMECGSSHDTLQELTAHMMVTGH). Over residues 469 to 481 (AVLDEKPKEKEKA) the composition is skewed to basic and acidic residues. Disordered regions lie at residues 469 to 489 (AVLD…EKYD), 569 to 594 (NSEI…PMPK), 616 to 690 (EKMK…PLSG), 784 to 815 (TKGK…TVTT), and 846 to 888 (TESH…RQSN). Polar residues-rich tracts occupy residues 571 to 593 (EIVS…SPMP) and 649 to 660 (SSGSGFKSQENS). Ser-672 carries the phosphoserine modification. 2 stretches are compositionally biased toward low complexity: residues 791-815 (GCSL…TVTT) and 847-860 (ESHT…SSIS). A DNA-binding region (homeobox; atypical) is located at residues 882 to 952 (RKGRQSNWNP…NVKYQLRRTG (71 aa)). 2 consecutive C2H2-type zinc fingers follow at residues 967–989 (FFCN…LESH) and 1032–1055 (YQCK…SKTH).

This sequence belongs to the teashirt C2H2-type zinc-finger protein family. As to quaternary structure, interacts (via N-terminus) with HDAC1 and HDAC2; the interaction is direct. Found in a trimeric complex with APBB1 and HDAC1; the interaction between HDAC1 and APBB1 is mediated by TSHZ3. Interacts (via homeobox domain) with APBB1 (via PID domain 1). As to expression, expressed in cortical neurons.

The protein resides in the nucleus. It localises to the cell projection. It is found in the growth cone. In terms of biological role, transcriptional regulator involved in developmental processes. Functions in association with APBB1, SET and HDAC factors as a transcriptional repressor, that inhibits the expression of CASP4. TSHZ3-mediated transcription repression involves the recruitment of histone deacetylases HDAC1 and HDAC2. Associates with chromatin in a region surrounding the CASP4 transcriptional start site(s). Regulates the development of neurons involved in both respiratory rhythm and airflow control. Promotes maintenance of nucleus ambiguus (nA) motoneurons, which govern upper airway function, and establishes a respiratory rhythm generator (RRG) activity compatible with survival at birth. Involved in the differentiation of the proximal uretic smooth muscle cells during developmental processes. Involved in the up-regulation of myocardin, that directs the expression of smooth muscle cells in the proximal ureter. Involved in the modulation of glutamatergic synaptic transmission and long-term synaptic potentiation. The chain is Teashirt homolog 3 (Tshz3) from Rattus norvegicus (Rat).